The primary structure comprises 227 residues: MISSKASDYQQRIGYVFTDPSLLLQALRHCSAGTPHNERLEFLGDSVVNLLIAEALFQRWPRADEGALTRARSELVRETSLASIARTMQLGEQLILGPGELKSGGHRRDSILADAVEAVIAAIYLDADLATCRTVVLPWFETALTALPVGKPEKDPKTRLQEWLQARQWSLPVYELIFESGDPHTKHFRVSCTLGELKLRTEGEGSSRRLAEQDAASHAINQLDSNK.

Residues 6-128 (ASDYQQRIGY…VIAAIYLDAD (123 aa)) enclose the RNase III domain. Mg(2+) is bound at residue E41. Residue D45 is part of the active site. Mg(2+) is bound by residues D114 and E117. E117 is an active-site residue. Residues 155 to 225 (DPKTRLQEWL…ASHAINQLDS (71 aa)) form the DRBM domain. Basic and acidic residues predominate over residues 203 to 212 (GEGSSRRLAE). Residues 203–227 (GEGSSRRLAEQDAASHAINQLDSNK) are disordered.

The protein belongs to the ribonuclease III family. In terms of assembly, homodimer. Requires Mg(2+) as cofactor.

The protein resides in the cytoplasm. The catalysed reaction is Endonucleolytic cleavage to 5'-phosphomonoester.. Functionally, digests double-stranded RNA. Involved in the processing of primary rRNA transcript to yield the immediate precursors to the large and small rRNAs (23S and 16S). Processes some mRNAs, and tRNAs when they are encoded in the rRNA operon. Processes pre-crRNA and tracrRNA of type II CRISPR loci if present in the organism. The chain is Ribonuclease 3 from Xylella fastidiosa (strain M12).